A 249-amino-acid polypeptide reads, in one-letter code: Phosphoribosylaminoimidazole-succinocarboxamide synthase (249 aa).

This sequence belongs to the SAICAR synthetase family.

The catalysed reaction is 5-amino-1-(5-phospho-D-ribosyl)imidazole-4-carboxylate + L-aspartate + ATP = (2S)-2-[5-amino-1-(5-phospho-beta-D-ribosyl)imidazole-4-carboxamido]succinate + ADP + phosphate + 2 H(+). It participates in purine metabolism; IMP biosynthesis via de novo pathway; 5-amino-1-(5-phospho-D-ribosyl)imidazole-4-carboxamide from 5-amino-1-(5-phospho-D-ribosyl)imidazole-4-carboxylate: step 1/2. This chain is Phosphoribosylaminoimidazole-succinocarboxamide synthase, found in Roseiflexus sp. (strain RS-1).